The primary structure comprises 143 residues: Transcriptional regulator MraZ (143 aa).

SpoVT-AbrB domains lie at 5 to 47 (EFEH…PLSE) and 76 to 119 (AVQC…NKAR).

This sequence belongs to the MraZ family. In terms of assembly, forms oligomers.

The protein resides in the cytoplasm. Its subcellular location is the nucleoid. This is Transcriptional regulator MraZ from Pediococcus pentosaceus (strain ATCC 25745 / CCUG 21536 / LMG 10740 / 183-1w).